Consider the following 284-residue polypeptide: 2-dehydro-3-deoxyphosphooctonate aldolase (284 aa).

It belongs to the KdsA family.

It is found in the cytoplasm. It carries out the reaction D-arabinose 5-phosphate + phosphoenolpyruvate + H2O = 3-deoxy-alpha-D-manno-2-octulosonate-8-phosphate + phosphate. It functions in the pathway carbohydrate biosynthesis; 3-deoxy-D-manno-octulosonate biosynthesis; 3-deoxy-D-manno-octulosonate from D-ribulose 5-phosphate: step 2/3. Its pathway is bacterial outer membrane biogenesis; lipopolysaccharide biosynthesis. The protein is 2-dehydro-3-deoxyphosphooctonate aldolase of Methylobacterium radiotolerans (strain ATCC 27329 / DSM 1819 / JCM 2831 / NBRC 15690 / NCIMB 10815 / 0-1).